A 204-amino-acid polypeptide reads, in one-letter code: Large ribosomal subunit protein bL25 (204 aa).

The segment at 1–23 (MSETLHLSAETRDRAGKGASRAL) is disordered.

It belongs to the bacterial ribosomal protein bL25 family. CTC subfamily. Part of the 50S ribosomal subunit; part of the 5S rRNA/L5/L18/L25 subcomplex. Contacts the 5S rRNA. Binds to the 5S rRNA independently of L5 and L18.

In terms of biological role, this is one of the proteins that binds to the 5S RNA in the ribosome where it forms part of the central protuberance. The chain is Large ribosomal subunit protein bL25 from Novosphingobium aromaticivorans (strain ATCC 700278 / DSM 12444 / CCUG 56034 / CIP 105152 / NBRC 16084 / F199).